The following is a 93-amino-acid chain: Large ribosomal subunit protein uL23 (93 aa).

It belongs to the universal ribosomal protein uL23 family. In terms of assembly, part of the 50S ribosomal subunit. Contacts protein L29, and trigger factor when it is bound to the ribosome.

Functionally, one of the early assembly proteins it binds 23S rRNA. One of the proteins that surrounds the polypeptide exit tunnel on the outside of the ribosome. Forms the main docking site for trigger factor binding to the ribosome. The polypeptide is Large ribosomal subunit protein uL23 (Campylobacter jejuni subsp. jejuni serotype O:6 (strain 81116 / NCTC 11828)).